Reading from the N-terminus, the 289-residue chain is LysM and putative peptidoglycan-binding domain-containing protein 4 (289 aa).

A disordered region spans residues 1 to 23 (MRLREGPTHSFQPPSSVHSSLGS). Over 1–208 (MRLREGPTHS…PASGADWGIR (208 aa)) the chain is Extracellular. Residues 9 to 23 (HSFQPPSSVHSSLGS) show a composition bias toward polar residues. Residues Asn-30 and Asn-59 are each glycosylated (N-linked (GlcNAc...) asparagine). The LysM domain occupies 71 to 115 (LERAITEDDNLNKLALQYGCKVSDIKRVNNLITDQDIYALKTIKI). Asn-134 and Asn-178 each carry an N-linked (GlcNAc...) asparagine glycan. The helical transmembrane segment at 209–229 (WWNAVFIMLLVGIVLPVFYIV) threads the bilayer. The Cytoplasmic segment spans residues 230-289 (YFKTQGDSEGTFSIEGRTNVSTSLSPHTNTGHSMEQMTQRTSGFSPGLLQDTHKLLNPGG). Positions 252 to 272 (SLSPHTNTGHSMEQMTQRTSG) are disordered.

It is found in the membrane. This chain is LysM and putative peptidoglycan-binding domain-containing protein 4 (lysmd4), found in Xenopus laevis (African clawed frog).